The sequence spans 490 residues: Cytochrome P450 2C8 (490 aa).

The substrate site is built by S100, N204, and R241. Residue S100 is modified to Phosphoserine. C435 is a heme binding site.

The protein belongs to the cytochrome P450 family. Heme is required as a cofactor.

The protein localises to the endoplasmic reticulum membrane. Its subcellular location is the microsome membrane. The enzyme catalyses an organic molecule + reduced [NADPH--hemoprotein reductase] + O2 = an alcohol + oxidized [NADPH--hemoprotein reductase] + H2O + H(+). It carries out the reaction (5Z,8Z,11Z,14Z)-eicosatetraenoate + reduced [NADPH--hemoprotein reductase] + O2 = (11R,12S)-epoxy-(5Z,8Z,14Z)-eicosatrienoate + oxidized [NADPH--hemoprotein reductase] + H2O + H(+). The catalysed reaction is (5Z,8Z,11Z,14Z)-eicosatetraenoate + reduced [NADPH--hemoprotein reductase] + O2 = (11S,12R)-epoxy-(5Z,8Z,14Z)-eicosatrienoate + oxidized [NADPH--hemoprotein reductase] + H2O + H(+). It catalyses the reaction (5Z,8Z,11Z,14Z)-eicosatetraenoate + reduced [NADPH--hemoprotein reductase] + O2 = (14R,15S)-epoxy-(5Z,8Z,11Z)-eicosatrienoate + oxidized [NADPH--hemoprotein reductase] + H2O + H(+). The enzyme catalyses (5Z,8Z,11Z,14Z)-eicosatetraenoate + reduced [NADPH--hemoprotein reductase] + O2 = (14S,15R)-epoxy-(5Z,8Z,11Z)-eicosatrienoate + oxidized [NADPH--hemoprotein reductase] + H2O + H(+). It carries out the reaction (5Z,8Z,11Z,14Z,17Z)-eicosapentaenoate + reduced [NADPH--hemoprotein reductase] + O2 = 11,12-epoxy-(5Z,8Z,14Z,17Z)-eicosatetraenoate + oxidized [NADPH--hemoprotein reductase] + H2O + H(+). The catalysed reaction is (5Z,8Z,11Z,14Z,17Z)-eicosapentaenoate + reduced [NADPH--hemoprotein reductase] + O2 = 14,15-epoxy-(5Z,8Z,11Z,17Z)-eicosatetraenoate + oxidized [NADPH--hemoprotein reductase] + H2O + H(+). It catalyses the reaction (5Z,8Z,11Z,14Z,17Z)-eicosapentaenoate + reduced [NADPH--hemoprotein reductase] + O2 = (17R,18S)-epoxy-(5Z,8Z,11Z,14Z)-eicosatetraenoate + oxidized [NADPH--hemoprotein reductase] + H2O + H(+). The enzyme catalyses (5Z,8Z,11Z,14Z,17Z)-eicosapentaenoate + reduced [NADPH--hemoprotein reductase] + O2 = (17S,18R)-epoxy-(5Z,8Z,11Z,14Z)-eicosatetraenoate + oxidized [NADPH--hemoprotein reductase] + H2O + H(+). It carries out the reaction (4Z,7Z,10Z,13Z,16Z,19Z)-docosahexaenoate + reduced [NADPH--hemoprotein reductase] + O2 = (19R,20S)-epoxy-(4Z,7Z,10Z,13Z,16Z)-docosapentaenoate + oxidized [NADPH--hemoprotein reductase] + H2O + H(+). The catalysed reaction is (4Z,7Z,10Z,13Z,16Z,19Z)-docosahexaenoate + reduced [NADPH--hemoprotein reductase] + O2 = (19S,20R)-epoxy-(4Z,7Z,10Z,13Z,16Z)-docosapentaenoate + oxidized [NADPH--hemoprotein reductase] + H2O + H(+). It catalyses the reaction all-trans-retinoate + reduced [NADPH--hemoprotein reductase] + O2 = all-trans-4-hydroxyretinoate + oxidized [NADPH--hemoprotein reductase] + H2O + H(+). The enzyme catalyses 17beta-estradiol + reduced [NADPH--hemoprotein reductase] + O2 = 16alpha,17beta-estriol + oxidized [NADPH--hemoprotein reductase] + H2O + H(+). It carries out the reaction estrone + reduced [NADPH--hemoprotein reductase] + O2 = 16alpha-hydroxyestrone + oxidized [NADPH--hemoprotein reductase] + H2O + H(+). It functions in the pathway steroid metabolism. The protein operates within lipid metabolism; arachidonate metabolism. It participates in cofactor metabolism; retinol metabolism. Functionally, a cytochrome P450 monooxygenase involved in the metabolism of various endogenous substrates, including fatty acids, steroid hormones and vitamins. Mechanistically, uses molecular oxygen inserting one oxygen atom into a substrate, and reducing the second into a water molecule, with two electrons provided by NADPH via cytochrome P450 reductase (NADPH--hemoprotein reductase). Primarily catalyzes the epoxidation of double bonds of polyunsaturated fatty acids (PUFA) with a preference for the last double bond. Catalyzes the hydroxylation of carbon-hydrogen bonds. Metabolizes all trans-retinoic acid toward its 4-hydroxylated form. Displays 16-alpha hydroxylase activity toward estrogen steroid hormones, 17beta-estradiol (E2) and estrone (E1). Plays a role in the oxidative metabolism of xenobiotics. It is the principal enzyme responsible for the metabolism of the anti-cancer drug paclitaxel (taxol). This chain is Cytochrome P450 2C8, found in Homo sapiens (Human).